A 381-amino-acid chain; its full sequence is Chaperone protein DnaJ (381 aa).

In terms of domain architecture, J spans 5–70 (DFYEVLGVSR…QKKAAYDQYG (66 aa)). The segment at 136 to 214 (GVTKEIEVPT…CHGQGRKQKT (79 aa)) adopts a CR-type zinc-finger fold. Residues Cys149, Cys152, Cys166, Cys169, Cys188, Cys191, Cys202, and Cys205 each coordinate Zn(2+). 4 CXXCXGXG motif repeats span residues 149-156 (CDSCDGSG), 166-173 (CGTCHGHG), 188-195 (CPTCHGKG), and 202-209 (CNECHGQG).

This sequence belongs to the DnaJ family. In terms of assembly, homodimer. It depends on Zn(2+) as a cofactor.

The protein resides in the cytoplasm. Participates actively in the response to hyperosmotic and heat shock by preventing the aggregation of stress-denatured proteins and by disaggregating proteins, also in an autonomous, DnaK-independent fashion. Unfolded proteins bind initially to DnaJ; upon interaction with the DnaJ-bound protein, DnaK hydrolyzes its bound ATP, resulting in the formation of a stable complex. GrpE releases ADP from DnaK; ATP binding to DnaK triggers the release of the substrate protein, thus completing the reaction cycle. Several rounds of ATP-dependent interactions between DnaJ, DnaK and GrpE are required for fully efficient folding. Also involved, together with DnaK and GrpE, in the DNA replication of plasmids through activation of initiation proteins. The chain is Chaperone protein DnaJ from Vibrio parahaemolyticus serotype O3:K6 (strain RIMD 2210633).